Consider the following 497-residue polypeptide: Ammonium transporter 1 (497 aa).

At 1–32 (MSSTTDATPTPSGVNGGDSMTVNLNQFYNNGD) the chain is on the extracellular side. The helical transmembrane segment at 33–53 (VAWILTSTALVFIMIPGVGFF) threads the bilayer. The Cytoplasmic portion of the chain corresponds to 54 to 63 (YSGLARRRSA). Residues 64 to 84 (ISMLFLSMMSVAIVAFQWFFW) form a helical membrane-spanning segment. At 85-122 (GYSLTFSHEGGPYIGSLANFGLRQTLGRPSSGASSVPD) the chain is on the extracellular side. The chain crosses the membrane as a helical span at residues 123-143 (ILFCVFQGMFAAITPALAIGA). Topologically, residues 144–150 (AADRGRM) are cytoplasmic. A helical transmembrane segment spans residues 151-171 (FPCMVFMFLWTSIVYDPIAFW). At 172–187 (TWNPNGWLNKLGSYDF) the chain is on the extracellular side. The chain crosses the membrane as a helical span at residues 188–208 (AGGSPVHISSGMAALAYSIVI). Topologically, residues 209 to 223 (GKRCDHGTTKYRPHN) are cytoplasmic. Residues 224-244 (VPHVVLGTVFLWFGWFGFNGG) form a helical membrane-spanning segment. Residues 245-253 (SSAAANMRG) are Extracellular-facing. A helical membrane pass occupies residues 254–274 (VMAVVVTHLAASVGGIVWCVI). The Cytoplasmic portion of the chain corresponds to 275 to 281 (DFAKNRH). A helical membrane pass occupies residues 282–302 (WSVVGFCEGAVAGLVAITPGS). A topological domain (extracellular) is located at residue glycine 303. A helical membrane pass occupies residues 304-324 (FVPPWAAVVIGALGAVFCYAA). Topologically, residues 325-338 (TYLKKIIRVDDALD) are cytoplasmic. Residues 339–359 (IFAEHGVGGMVGNILTALFAA) traverse the membrane as a helical segment. Topologically, residues 360 to 394 (DYIEALDGSGTAYTGGWITHHYIQLGYQLADTVSC) are extracellular. The helical transmembrane segment at 395–415 (AAYSFAVSCALLFVMNYIPGL) threads the bilayer. Residues 416–497 (SLRVSREDEV…AESEAQAPAI (82 aa)) lie on the Cytoplasmic side of the membrane. The disordered stretch occupies residues 440 to 497 (YKDSTDEPPPITTSGVQYTSPTVSDSASNEKEQEHRAQNEAQKEEEYRAESEAQAPAI). Polar residues predominate over residues 451-466 (TTSGVQYTSPTVSDSA). A compositionally biased stretch (basic and acidic residues) spans 467–490 (SNEKEQEHRAQNEAQKEEEYRAES).

Belongs to the ammonia transporter channel (TC 1.A.11.2) family.

The protein resides in the membrane. In terms of biological role, transporter for ammonium to use as a nitrogen source. Under ammonium limitation acts as an ammonium sensor, generating a signal that leads to pseudohyphal growth. In Schizosaccharomyces pombe (strain 972 / ATCC 24843) (Fission yeast), this protein is Ammonium transporter 1 (amt1).